Here is a 294-residue protein sequence, read N- to C-terminus: Pyridoxal 5'-phosphate synthase subunit PdxS (294 aa).

D24 serves as a coordination point for D-ribose 5-phosphate. The Schiff-base intermediate with D-ribose 5-phosphate role is filled by K81. Residue G153 coordinates D-ribose 5-phosphate. D-glyceraldehyde 3-phosphate is bound at residue R165. Residues G214 and 235-236 (GS) contribute to the D-ribose 5-phosphate site.

This sequence belongs to the PdxS/SNZ family. In terms of assembly, homohexamer and homododecamer. In the presence of PdxT, forms a dodecamer of heterodimers.

The catalysed reaction is aldehydo-D-ribose 5-phosphate + D-glyceraldehyde 3-phosphate + L-glutamine = pyridoxal 5'-phosphate + L-glutamate + phosphate + 3 H2O + H(+). It participates in cofactor biosynthesis; pyridoxal 5'-phosphate biosynthesis. Its function is as follows. Catalyzes the formation of pyridoxal 5'-phosphate from ribose 5-phosphate (RBP), glyceraldehyde 3-phosphate (G3P) and ammonia. The ammonia is provided by the PdxT subunit. Can also use ribulose 5-phosphate and dihydroxyacetone phosphate as substrates, resulting from enzyme-catalyzed isomerization of RBP and G3P, respectively. The sequence is that of Pyridoxal 5'-phosphate synthase subunit PdxS from Bacillus subtilis (strain 168).